The primary structure comprises 371 residues: Barbiturase 2 (371 aa).

The segment at 1–104 is RU A; it reads MTRPIEVRKV…TIFAYAPEGR (104 aa). Substrate-binding positions include Arg-53 and 83–84; that span reads SG. The interval 112–247 is RU B; sequence RVTVGYAMSE…AQIVVVGNAR (136 aa). Lys-162 is a catalytic residue. Residues Asn-194 and 230-231 contribute to the substrate site; that span reads SS. Catalysis depends on Ser-230, which acts as the Nucleophile. The tract at residues 253-371 is RU C; it reads FRVGHSIMKD…PVIAIVDLEA (119 aa). Residue Glu-303 participates in Mg(2+) binding. Residues Lys-330 and 349–350 each bind substrate; that span reads SV. Positions 352, 355, 356, 357, and 360 each coordinate Mg(2+).

Belongs to the cyclic amide hydrolase (CyAH) family. As to quaternary structure, homotetramer.

It carries out the reaction barbiturate + H2O = 3-oxo-3-ureidopropanoate. Its pathway is pyrimidine metabolism; uracil degradation via oxidative pathway; malonate and urea from uracil: step 2/3. Functionally, responsible for the hydrolysis of barbituric acid (2,4,6-trihydroxy-1,3-pyrimidine), an intermediate in the oxidative catabolism of pyrimidines. Catalyzes the hydrolytic opening of the pyrimidine ring of barbituric acid to yield ureidomalonic acid. Can also use cyanuric acid as a substrate, albeit with lower efficiency. The polypeptide is Barbiturase 2 (Nocardioides sp. (strain ATCC BAA-499 / JS614)).